We begin with the raw amino-acid sequence, 351 residues long: MKNPNIIQPEDLRISQIIDANLDRAREGLRVLEDWARFGLGNEDFVIRIKNFRQILGKNHLEIYKLSRNHIEDQCKGLSHVEQINRNSSSKIISSNSARVQEALRVIEEFSRIHNSKLSKIASEIRYEIYTLEIEILNFNTRKRAQSIISKNNLYSITDPRENLLEIIEKILLGGVKIIQHRFKEGNDKDHLKEAIEINKLCKKYNSLFIVNNRLDIALASKADGVHLGQDDLDIKTVRKLLGASKIIGVSANNSTDINKAVKDGCDYIGVGPVFPTLTKKNKEPLGEEKIKALTKELNIPCFAIGGINKLNISSLKNHGISKVAIVSGLLNSEDPKDEAMIIIKELSHEN.

Positions 1–128 (MKNPNIIQPE…SKIASEIRYE (128 aa)) are unknown. A thiamine-phosphate synthase region spans residues 129 to 351 (IYTLEIEILN…IIIKELSHEN (223 aa)). 4-amino-2-methyl-5-(diphosphooxymethyl)pyrimidine contacts are provided by residues 180 to 184 (QHRFK) and Asn-212. Residues Asn-213 and Asp-232 each contribute to the Mg(2+) site. Residue Ser-251 coordinates 4-amino-2-methyl-5-(diphosphooxymethyl)pyrimidine. 277–279 (TLT) is a binding site for 2-[(2R,5Z)-2-carboxy-4-methylthiazol-5(2H)-ylidene]ethyl phosphate. 4-amino-2-methyl-5-(diphosphooxymethyl)pyrimidine is bound at residue Lys-280. Residues Gly-307 and 327–328 (VS) contribute to the 2-[(2R,5Z)-2-carboxy-4-methylthiazol-5(2H)-ylidene]ethyl phosphate site.

It belongs to the thiamine-phosphate synthase family.

It carries out the reaction 2-[(2R,5Z)-2-carboxy-4-methylthiazol-5(2H)-ylidene]ethyl phosphate + 4-amino-2-methyl-5-(diphosphooxymethyl)pyrimidine + 2 H(+) = thiamine phosphate + CO2 + diphosphate. The catalysed reaction is 2-(2-carboxy-4-methylthiazol-5-yl)ethyl phosphate + 4-amino-2-methyl-5-(diphosphooxymethyl)pyrimidine + 2 H(+) = thiamine phosphate + CO2 + diphosphate. It catalyses the reaction 4-methyl-5-(2-phosphooxyethyl)-thiazole + 4-amino-2-methyl-5-(diphosphooxymethyl)pyrimidine + H(+) = thiamine phosphate + diphosphate. It participates in cofactor biosynthesis; thiamine diphosphate biosynthesis; thiamine phosphate from 4-amino-2-methyl-5-diphosphomethylpyrimidine and 4-methyl-5-(2-phosphoethyl)-thiazole: step 1/1. Its function is as follows. Condenses 4-methyl-5-(beta-hydroxyethyl)thiazole monophosphate (THZ-P) and 2-methyl-4-amino-5-hydroxymethyl pyrimidine pyrophosphate (HMP-PP) to form thiamine monophosphate (TMP). This chain is Thiamine-phosphate synthase, found in Prochlorococcus marinus subsp. pastoris (strain CCMP1986 / NIES-2087 / MED4).